We begin with the raw amino-acid sequence, 152 residues long: Nucleoside diphosphate kinase A (152 aa).

Positions 12, 60, 88, and 94 each coordinate ATP. Residue K100 forms a Glycyl lysine isopeptide (Lys-Gly) (interchain with G-Cter in ubiquitin) linkage. Positions 105 and 115 each coordinate ATP. H118 (pros-phosphohistidine intermediate) is an active-site residue. Phosphoserine occurs at positions 120, 122, and 125.

The protein belongs to the NDK family. Hexamer of two different chains: An and B (A6, A5B, A4B2, A3B3, A2B4, AB5, B6). Interacts with PRUNE1. Component of the SET complex, composed of at least ANP32A, APEX1, HMGB2, NME1, SET and TREX1. Within this complex, interacts directly with SET. Also interacts with TREX1, but only following translocation to the nucleus. It depends on Mg(2+) as a cofactor.

The protein resides in the cytoplasm. The protein localises to the nucleus. It carries out the reaction a 2'-deoxyribonucleoside 5'-diphosphate + ATP = a 2'-deoxyribonucleoside 5'-triphosphate + ADP. It catalyses the reaction a ribonucleoside 5'-diphosphate + ATP = a ribonucleoside 5'-triphosphate + ADP. Its activity is regulated as follows. Autophosphorylation at His-118 increases serine/threonine protein kinase activity of the enzyme. Interaction with the SET complex inhibits exonuclease activity. In terms of biological role, major role in the synthesis of nucleoside triphosphates other than ATP. The ATP gamma phosphate is transferred to the NDP beta phosphate via a ping-pong mechanism, using a phosphorylated active-site intermediate. Possesses nucleoside-diphosphate kinase, serine/threonine-specific protein kinase, geranyl and farnesyl pyrophosphate kinase, histidine protein kinase and 3'-5' exonuclease activities. Involved in cell proliferation, differentiation and development, signal transduction, G protein-coupled receptor endocytosis, and gene expression. Required for neural development including neural patterning and cell fate determination. During GZMA-mediated cell death, works in concert with TREX1. NME1 nicks one strand of DNA and TREX1 removes bases from the free 3' end to enhance DNA damage and prevent DNA end reannealing and rapid repair. The sequence is that of Nucleoside diphosphate kinase A (Nme1) from Rattus norvegicus (Rat).